Here is a 146-residue protein sequence, read N- to C-terminus: Large ribosomal subunit protein uL15 (146 aa).

A disordered region spans residues 1-56 (MKLHELRAAEGANKASKRVGRGTGSGLGKTSGRGQNGQNSRSGGGVRPGFEGGQMP). 2 stretches are compositionally biased toward gly residues: residues 21 to 35 (RGTG…GRGQ) and 42 to 52 (SGGGVRPGFEG).

It belongs to the universal ribosomal protein uL15 family. Part of the 50S ribosomal subunit.

Binds to the 23S rRNA. The protein is Large ribosomal subunit protein uL15 of Clostridium botulinum (strain Okra / Type B1).